Consider the following 124-residue polypeptide: Putative outer membrane protein TC_0858 (124 aa).

Residues 1-31 (MGKTKKRKQSITLIEMMVVITLIGIISGALA) form the signal peptide.

It localises to the cell outer membrane. This chain is Putative outer membrane protein TC_0858, found in Chlamydia muridarum (strain MoPn / Nigg).